Reading from the N-terminus, the 525-residue chain is GMP synthase [glutamine-hydrolyzing] (525 aa).

Residues 8–207 (KILILDFGSQ…VMDICGCDNK (200 aa)) enclose the Glutamine amidotransferase type-1 domain. The Nucleophile role is filled by Cys85. Catalysis depends on residues His181 and Glu183. In terms of domain architecture, GMPS ATP-PPase spans 208 to 400 (WQPASIIEDA…LGLPYDMLYR (193 aa)). Residue 235–241 (SGGVDSS) participates in ATP binding.

As to quaternary structure, homodimer.

It carries out the reaction XMP + L-glutamine + ATP + H2O = GMP + L-glutamate + AMP + diphosphate + 2 H(+). Its pathway is purine metabolism; GMP biosynthesis; GMP from XMP (L-Gln route): step 1/1. Catalyzes the synthesis of GMP from XMP. The protein is GMP synthase [glutamine-hydrolyzing] of Shewanella amazonensis (strain ATCC BAA-1098 / SB2B).